Consider the following 355-residue polypeptide: Eukaryotic initiation factor 4A-13 (355 aa).

The Q motif signature appears at 40–68 (DSFDAMGLQENLLRGIYAYGFEKPSAIQQ). One can recognise a Helicase ATP-binding domain in the interval 71-241 (IVPFCKGLDV…RKFMNQPVRI (171 aa)). 84 to 91 (AQSGTGKT) is a binding site for ATP. The DEAD box motif lies at 189–192 (DEAD). One can recognise a Helicase C-terminal domain in the interval 252-355 (GIKQFYVNVD…QQVSLVINYD (104 aa)).

It belongs to the DEAD box helicase family. eIF4A subfamily. As to quaternary structure, eIF4F is a multi-subunit complex, the composition of which varies with external and internal environmental conditions. It is composed of at least EIF4A, EIF4E and EIF4G.

The catalysed reaction is ATP + H2O = ADP + phosphate + H(+). ATP-dependent RNA helicase which is a subunit of the eIF4F complex involved in cap recognition and is required for mRNA binding to ribosome. In the current model of translation initiation, eIF4A unwinds RNA secondary structures in the 5'-UTR of mRNAs which is necessary to allow efficient binding of the small ribosomal subunit, and subsequent scanning for the initiator codon. This chain is Eukaryotic initiation factor 4A-13, found in Nicotiana tabacum (Common tobacco).